We begin with the raw amino-acid sequence, 312 residues long: Probable N-glycosylase/DNA lyase (312 aa).

The disordered stretch occupies residues 1–22 (MRIPVGDFDLEMTQRSGQTSQP). Residues 13–22 (TQRSGQTSQP) show a composition bias toward polar residues. Residue Lys-235 is part of the active site.

The protein belongs to the type-1 OGG1 family.

It catalyses the reaction 2'-deoxyribonucleotide-(2'-deoxyribose 5'-phosphate)-2'-deoxyribonucleotide-DNA = a 3'-end 2'-deoxyribonucleotide-(2,3-dehydro-2,3-deoxyribose 5'-phosphate)-DNA + a 5'-end 5'-phospho-2'-deoxyribonucleoside-DNA + H(+). Its function is as follows. DNA repair enzyme that incises DNA at 8-oxoG residues. Excises 7,8-dihydro-8-oxoguanine and 2,6-diamino-4-hydroxy-5-N-methylformamidopyrimidine (FAPY) from damaged DNA. Has a beta-lyase activity that nicks DNA 3' to the lesion. This is Probable N-glycosylase/DNA lyase from Methanothermobacter thermautotrophicus (strain ATCC 29096 / DSM 1053 / JCM 10044 / NBRC 100330 / Delta H) (Methanobacterium thermoautotrophicum).